Reading from the N-terminus, the 130-residue chain is Ribosome-binding factor A (130 aa).

The interval 111–130 is disordered; that stretch reads RDLDDVGPEATSSDEDAEQR.

Belongs to the RbfA family. In terms of assembly, monomer. Binds 30S ribosomal subunits, but not 50S ribosomal subunits or 70S ribosomes.

The protein localises to the cytoplasm. Functionally, one of several proteins that assist in the late maturation steps of the functional core of the 30S ribosomal subunit. Associates with free 30S ribosomal subunits (but not with 30S subunits that are part of 70S ribosomes or polysomes). Required for efficient processing of 16S rRNA. May interact with the 5'-terminal helix region of 16S rRNA. This Xanthomonas axonopodis pv. citri (strain 306) protein is Ribosome-binding factor A.